Reading from the N-terminus, the 218-residue chain is Eukaryotic translation initiation factor 3 subunit K (218 aa).

Alanine 2 is modified (N-acetylalanine). At threonine 28 the chain carries Phosphothreonine. The PCI domain occupies 42–204 (YDLEANLAVL…SIKPKNIVEK (163 aa)). Position 217 is a phosphoserine (serine 217).

Component of the eukaryotic translation initiation factor 3 (eIF-3) complex, which is composed of 13 subunits: EIF3A, EIF3B, EIF3C, EIF3D, EIF3E, EIF3F, EIF3G, EIF3H, EIF3I, EIF3J, EIF3K, EIF3L and EIF3M. The eIF-3 complex appears to include 3 stable modules: module A is composed of EIF3A, EIF3B, EIF3G and EIF3I; module B is composed of EIF3F, EIF3H, and EIF3M; and module C is composed of EIF3C, EIF3D, EIF3E, EIF3K and EIF3L. EIF3C of module C binds EIF3B of module A and EIF3H of module B, thereby linking the three modules. EIF3J is a labile subunit that binds to the eIF-3 complex via EIF3B. The eIF-3 complex interacts with RPS6KB1 under conditions of nutrient depletion. Mitogenic stimulation leads to binding and activation of a complex composed of MTOR and RPTOR, leading to phosphorylation and release of RPS6KB1 and binding of EIF4B to eIF-3. Interacts with CCND3, but not with CCND1 and CCND2. Ubiquitous, with the highest levels of expression in brain, testis and kidney.

It is found in the nucleus. It localises to the cytoplasm. Component of the eukaryotic translation initiation factor 3 (eIF-3) complex, which is required for several steps in the initiation of protein synthesis. The eIF-3 complex associates with the 40S ribosome and facilitates the recruitment of eIF-1, eIF-1A, eIF-2:GTP:methionyl-tRNAi and eIF-5 to form the 43S pre-initiation complex (43S PIC). The eIF-3 complex stimulates mRNA recruitment to the 43S PIC and scanning of the mRNA for AUG recognition. The eIF-3 complex is also required for disassembly and recycling of post-termination ribosomal complexes and subsequently prevents premature joining of the 40S and 60S ribosomal subunits prior to initiation. The eIF-3 complex specifically targets and initiates translation of a subset of mRNAs involved in cell proliferation, including cell cycling, differentiation and apoptosis, and uses different modes of RNA stem-loop binding to exert either translational activation or repression. This chain is Eukaryotic translation initiation factor 3 subunit K, found in Homo sapiens (Human).